A 51-amino-acid chain; its full sequence is Cytochrome bd ubiquinol oxidase subunit X (51 aa).

Over Met1–Tyr3 the chain is Cytoplasmic. Residues Phe4–Leu26 traverse the membrane as a helical segment. Over Met27 to His51 the chain is Periplasmic.

The protein belongs to the cytochrome ubiquinol oxidase subunit X family. May be a subunit of cytochrome ubiquinol oxidase.

The protein resides in the cell inner membrane. The enzyme catalyses 2 a ubiquinol + O2(in) + 4 H(+)(in) = 2 a ubiquinone + 2 H2O(in) + 4 H(+)(out). It participates in energy metabolism; oxidative phosphorylation. Required for correct functioning of cytochrome bd oxidase. This is Cytochrome bd ubiquinol oxidase subunit X (cydX) from Brucella abortus (strain 2308).